The primary structure comprises 401 residues: Acetate kinase (401 aa).

Position 7 (Asn-7) interacts with Mg(2+). Lys-14 lines the ATP pocket. Residue Arg-90 coordinates substrate. The active-site Proton donor/acceptor is Asp-147. ATP contacts are provided by residues 207–211 (HMGNG), 282–284 (DMR), and 331–335 (GIGEN). Mg(2+) is bound at residue Glu-385.

This sequence belongs to the acetokinase family. In terms of assembly, homodimer. The cofactor is Mg(2+). It depends on Mn(2+) as a cofactor.

The protein resides in the cytoplasm. The enzyme catalyses acetate + ATP = acetyl phosphate + ADP. It participates in metabolic intermediate biosynthesis; acetyl-CoA biosynthesis; acetyl-CoA from acetate: step 1/2. Functionally, catalyzes the formation of acetyl phosphate from acetate and ATP. Can also catalyze the reverse reaction. The chain is Acetate kinase from Clostridium acetobutylicum (strain ATCC 824 / DSM 792 / JCM 1419 / IAM 19013 / LMG 5710 / NBRC 13948 / NRRL B-527 / VKM B-1787 / 2291 / W).